The chain runs to 461 residues: E3 ubiquitin-protein ligase parkin (461 aa).

Positions V30–F90 constitute a Ubiquitin-like domain. S92 is subject to Phosphoserine. Residues A145–P227 form an RING-type 0; atypical zinc finger. Zn(2+) is bound by residues C151, C155, C167, and C170. T176 carries the post-translational modification Phosphothreonine. 22 residues coordinate Zn(2+): C197, C202, C213, H216, C240, C243, C255, H259, C262, C265, C291, C295, C334, C339, C354, C356, C361, C364, H369, C373, C415, and C418. Residues K236–G461 form a TRIAD supradomain region. The segment at C240–C295 adopts an RING-type 1 zinc-finger fold. 2 IBR-type zinc fingers span residues E315 to C373 and L411 to R452. Residues C415–C446 form an RING-type 2; atypical zinc finger. The active site involves C428. 6 residues coordinate Zn(2+): C433, C438, C443, C446, C454, and H458.

The protein belongs to the RBR family. Parkin subfamily. As to quaternary structure, forms an E3 ubiquitin ligase complex with E2 ubiquitin-conjugating enzymes. Post-translationally, auto-ubiquitinates in an E2-dependent manner leading to its own degradation. Phosphorylated. Activation requires phosphorylation at Ser-92 by Pink1 and binding to Pink1-phosphorylated polyubiquitin chains. Phosphorylation at Thr-176 by Pink1 is also important for mitochondrial localization.

Its subcellular location is the mitochondrion. The protein resides in the cytoplasm. It is found in the cytosol. The catalysed reaction is [E2 ubiquitin-conjugating enzyme]-S-ubiquitinyl-L-cysteine + [acceptor protein]-L-lysine = [E2 ubiquitin-conjugating enzyme]-L-cysteine + [acceptor protein]-N(6)-ubiquitinyl-L-lysine.. It participates in protein modification; protein ubiquitination. In the autoinhibited state the side chain of Phe-460 inserts into a hydrophobic groove in RING-0, occluding the ubiquitin acceptor site Cys-428, whereas the REP repressor element binds RING-1 and blocks its E2-binding site. Activation of park requires 2 steps: (1) phosphorylation at Ser-92 by Pink1 and (2) binding to phosphorylated ubiquitin, leading to unlock repression of the catalytic Cys-428 by the RING-0 region via an allosteric mechanism and converting park to its fully-active form. According to another report, phosphorylation at Ser-92 by Pink1 is not essential for activation and only binding to phosphorylated ubiquitin is essential to unlock repression. Its function is as follows. E3 ubiquitin-protein ligase which accepts ubiquitin from E2 ubiquitin-conjugating enzymes in the form of a thioester and then directly transfers the ubiquitin to targeted substrates, such as Marf, Opa1, Sep1, Tom20 and porin. Mediates monoubiquitination as well as 'Lys-6', 'Lys-11', 'Lys-48'-linked and 'Lys-63'-linked polyubiquitination of substrates, depending on the context. Protects against mitochondrial dysfunction during cellular stress, by acting downstream of Pink1, to coordinate mitochondrial quality control mechanisms that remove and replace dysfunctional mitochondrial components. Depending on the severity of mitochondrial damage and/or dysfunction, activity ranges from preventing apoptosis and stimulating mitochondrial biogenesis to regulating mitochondrial dynamics and eliminating severely damaged mitochondria via mitophagy. Appears to be particularly important in maintaining the physiology and function of cells with high energy demands that are undergoing stress or altered metabolic environment, including spermatids, muscle cells and neurons such as the dopaminergic (DA) neurons. Activation and recruitment onto the outer membrane of damaged/dysfunctional mitochondria (OMM) requires Pink1-mediated phosphorylation of both park and ubiquitin. In depolarized mitochondria, mediates the decision between mitophagy or preventing apoptosis by inducing either the poly- or monoubiquitination of porin/VDAC; polyubiquitination of porin promotes mitophagy, while monoubiquitination of porin decreases mitochondrial calcium influx which ultimately inhibits apoptosis. When cellular stress results in irreversible mitochondrial damage, promotes the autophagic degradation of dysfunctional depolarized mitochondria (mitophagy) by promoting the ubiquitination of mitochondrial proteins. Preferentially assembles 'Lys-6'-, 'Lys-11'- and 'Lys-63'-linked polyubiquitin chains following mitochondrial damage, leading to mitophagy. In developing tissues, inhibits JNK-mediated apoptosis by negatively regulating bsk transcription. The Pink1-park pathway also promotes fission and/or inhibits fusion of damaged mitochondria by mediating the ubiquitination and subsequent degradation of proteins involved in mitochondrial fusion/fission such as Marf and Opa1. This prevents the refusion of unhealthy mitochondria with the healthy mitochondrial network and/or initiates mitochondrial fragmentation facilitating their later engulfment by autophagosomes. Regulates motility of damaged mitochondria by phosphorylating Miro which likely promotes its park-dependent degradation by the proteasome; in motor neurons, this inhibits mitochondrial intracellular anterograde transport along the axons which probably increases the chance of the mitochondria being eliminated in the soma. The Pink1-park pathway is also involved in mitochondrial regeneration processes such as promoting mitochondrial biogenesis, activating localized mitochondrial repair, promoting selective turnover of mitochondrial proteins and initiating the mitochondrial import of endogenous proteins. Involved in mitochondrial biogenesis via the ubiquitination of transcriptional repressor Paris which leads to its subsequent proteasomal degradation and allows activation of the transcription factor srl. Promotes localized mitochondrial repair by activating the translation of specific nuclear-encoded mitochondrial RNAs (nc-mtRNAs) on the mitochondrial surface, including several key electron transport chain component nc-mtRNAs. This is E3 ubiquitin-protein ligase parkin from Pediculus humanus subsp. corporis (Body louse).